A 476-amino-acid chain; its full sequence is mRNA cap guanine-N(7) methyltransferase (476 aa).

The span at 1–14 shows a compositional bias: basic and acidic residues; it reads MANSAKAEEYEKMS. Residues 1 to 146 form a disordered region; it reads MANSAKAEEY…KQKNLEEGHS (146 aa). Over residues 20 to 50 the composition is skewed to polar residues; that stretch reads ASVNSETESSFNINENTTASGTGLSEKTSVC. Phosphoserine is present on residues Ser-24, Ser-28, and Ser-29. Basic and acidic residues-rich tracts occupy residues 54 to 68 and 84 to 118; these read DIAR…DLVK and LDPE…DKSS. Ser-118 carries the phosphoserine modification. The Nuclear localization signal signature appears at 126 to 128; it reads KRK. Positions 129–145 are enriched in basic and acidic residues; sequence IALEDVPEKQKNLEEGH. Residues 167–475 form the mRNA cap 0 methyltransferase domain; it reads SRIFYLRNFN…IYLVFAFEKQ (309 aa). 176-177 serves as a coordination point for mRNA; the sequence is NN. Positions 180, 205, 227, 261, 284, and 289 each coordinate S-adenosyl-L-methionine.

Belongs to the class I-like SAM-binding methyltransferase superfamily. mRNA cap 0 methyltransferase family. As to quaternary structure, interacts with importin alpha, leading to stimulate both RNA-binding and methyltransferase activity. Interaction with importin alpha and beta is required for its nuclear localization, importin beta dissociating in response to RanGTP, allowing RNMT-importin alpha to bind RNA substrates. Interacts with elongating form of polymerase II and RNGTT. Interacts with RAMAC, this interaction significantly enhances RNA-binding and cap methyltransferase activity. In terms of tissue distribution, widely expressed.

The protein resides in the nucleus. It catalyses the reaction a 5'-end (5'-triphosphoguanosine)-ribonucleoside in mRNA + S-adenosyl-L-methionine = a 5'-end (N(7)-methyl 5'-triphosphoguanosine)-ribonucleoside in mRNA + S-adenosyl-L-homocysteine. With respect to regulation, methyltransferase activity is activated by RAMAC. Its function is as follows. Catalytic subunit of the mRNA-capping methyltransferase RNMT:RAMAC complex that methylates the N7 position of the added guanosine to the 5'-cap structure of mRNAs. Binds RNA containing 5'-terminal GpppC. The polypeptide is mRNA cap guanine-N(7) methyltransferase (RNMT) (Homo sapiens (Human)).